Here is a 201-residue protein sequence, read N- to C-terminus: 3-isopropylmalate dehydratase small subunit (201 aa).

Belongs to the LeuD family. LeuD type 1 subfamily. Heterodimer of LeuC and LeuD.

The catalysed reaction is (2R,3S)-3-isopropylmalate = (2S)-2-isopropylmalate. The protein operates within amino-acid biosynthesis; L-leucine biosynthesis; L-leucine from 3-methyl-2-oxobutanoate: step 2/4. Its function is as follows. Catalyzes the isomerization between 2-isopropylmalate and 3-isopropylmalate, via the formation of 2-isopropylmaleate. The chain is 3-isopropylmalate dehydratase small subunit from Shewanella piezotolerans (strain WP3 / JCM 13877).